We begin with the raw amino-acid sequence, 369 residues long: 3-dehydroquinate synthase (369 aa).

NAD(+) is bound by residues 75–80 (DGEEHK), 109–113 (GVIGD), 133–134 (TT), Lys146, Lys155, and 173–176 (TLKT). Glu188, His251, and His268 together coordinate Zn(2+).

It belongs to the sugar phosphate cyclases superfamily. Dehydroquinate synthase family. The cofactor is Co(2+). Zn(2+) serves as cofactor. NAD(+) is required as a cofactor.

The protein localises to the cytoplasm. It catalyses the reaction 7-phospho-2-dehydro-3-deoxy-D-arabino-heptonate = 3-dehydroquinate + phosphate. The protein operates within metabolic intermediate biosynthesis; chorismate biosynthesis; chorismate from D-erythrose 4-phosphate and phosphoenolpyruvate: step 2/7. In terms of biological role, catalyzes the conversion of 3-deoxy-D-arabino-heptulosonate 7-phosphate (DAHP) to dehydroquinate (DHQ). The sequence is that of 3-dehydroquinate synthase from Legionella pneumophila subsp. pneumophila (strain Philadelphia 1 / ATCC 33152 / DSM 7513).